Here is a 3034-residue protein sequence, read N- to C-terminus: Cadherin EGF LAG seven-pass G-type receptor 1 (3034 aa).

The signal sequence occupies residues 1 to 29 (MAPSSPRVLPALVLLAAAALPALELGAAA). The Extracellular portion of the chain corresponds to 30–2484 (WELRVPGGAR…REHGEVLPLK (2455 aa)). The span at 222–243 (GTPSESPSVSPSLLNLSQPRAG) shows a compositional bias: low complexity. The tract at residues 222 to 267 (GTPSESPSVSPSLLNLSQPRAGVVRRSRRGTGSSTSPQFPLPSYQV) is disordered. N-linked (GlcNAc...) asparagine glycosylation is present at asparagine 236. 9 Cadherin domains span residues 261–368 (PLPS…SPVF), 369–474 (EQSE…YPQF), 475–580 (SEKR…APIF), 581–702 (VSSP…DPMF), 703–804 (TQPV…RPVF), 805–907 (QSSH…APRF), 908–1014 (LRDF…PPVF), 1015–1116 (EKDE…PPEL), and 1121–1239 (ILFN…SPLL). N-linked (GlcNAc...) asparagine glycosylation is found at asparagine 561, asparagine 649, and asparagine 793. Asparagine 1129, asparagine 1154, asparagine 1228, asparagine 1264, asparagine 1274, and asparagine 1302 each carry an N-linked (GlcNAc...) asparagine glycan. Positions 1318-1376 (DDNICLREPCENYMKCVSVLRFDSSAPFISSTTVLFRPIHPITGLRCRCPPGFTGDYCE) constitute an EGF-like 1; calcium-binding domain. 9 disulfides stabilise this stretch: cysteine 1322–cysteine 1333, cysteine 1327–cysteine 1364, cysteine 1366–cysteine 1375, cysteine 1382–cysteine 1393, cysteine 1387–cysteine 1402, cysteine 1404–cysteine 1413, cysteine 1422–cysteine 1433, cysteine 1427–cysteine 1443, and cysteine 1445–cysteine 1455. Residues 1378–1414 (EIDLCYSNPCGANGRCRSREGGYTCECFEDFTGEHCQ) form the EGF-like 2; calcium-binding domain. One can recognise an EGF-like 3; calcium-binding domain in the interval 1418-1456 (RSGRCASGVCKNGGTCVNLLIGGFHCVCPPGEYEHPYCE). The Laminin G-like 1 domain maps to 1457-1661 (VSTRSFPPQS…IANNGTRAGC (205 aa)). Asparagine 1591, asparagine 1638, and asparagine 1655 each carry an N-linked (GlcNAc...) asparagine glycan. 13 disulfides stabilise this stretch: cysteine 1635/cysteine 1661, cysteine 1668/cysteine 1679, cysteine 1673/cysteine 1688, cysteine 1690/cysteine 1699, cysteine 1855/cysteine 1885, cysteine 1891/cysteine 1902, cysteine 1896/cysteine 1911, cysteine 1913/cysteine 1922, cysteine 1926/cysteine 1937, cysteine 1931/cysteine 1949, cysteine 1951/cysteine 1960, cysteine 1968/cysteine 1981, and cysteine 1983/cysteine 1993. One can recognise an EGF-like 4; calcium-binding domain in the interval 1664-1700 (QRNFCDGTSCQNGGTCVNRWNTYLCECPLRFGGKNCE). At asparagine 1681 the chain carries (3R)-3-hydroxyasparagine. In terms of domain architecture, Laminin G-like 2 spans 1704 to 1885 (PHPQRFTGES…ALKVRVKDGC (182 aa)). One can recognise an EGF-like 5; calcium-binding domain in the interval 1887–1922 (VEDPCASSPCPPHSHCRDTWDSYSCICDRGYFGKKC). Aspartate 1904 is subject to (3R)-3-hydroxyaspartate. Residues 1923–1961 (VDACLLNPCKHVAACVRSPNTPRGYSCECGPGHYGQYCE) enclose the EGF-like 6; calcium-binding domain. The EGF-like 7; calcium-binding domain maps to 1962 to 1994 (NKVDLPCPKGWWGNPVCGPCHCAVSQGFDPDCN). Asparagine 1994 is a glycosylation site (N-linked (GlcNAc...) asparagine). The region spanning 1996-2031 (TNGQCQCKENYYKPPAQDACLPCDCFPHGSHSRACD) is the EGF-like 8; calcium-binding domain. Intrachain disulfides connect cysteine 2000–cysteine 2015, cysteine 2002–cysteine 2018, cysteine 2020–cysteine 2030, cysteine 2039–cysteine 2048, and cysteine 2051–cysteine 2063. Positions 2018-2065 (CDCFPHGSHSRACDMDTGQCACKPGVIGRQCNRCDNPFAEVTSLGCEV) constitute a Laminin EGF-like domain. Residues asparagine 2118, asparagine 2137, asparagine 2144, asparagine 2155, asparagine 2160, and asparagine 2272 are each glycosylated (N-linked (GlcNAc...) asparagine). The tract at residues 2295 to 2346 (SVSFPADTFKPPEKKEGPVVRLTNRRTTPLTAQPEPRAERETSSSRRRRHPD) is disordered. The GAIN-B domain maps to 2312 to 2476 (PVVRLTNRRT…AVLMDISRRE (165 aa)). Disulfide bonds link cysteine 2426/cysteine 2458 and cysteine 2446/cysteine 2460. The tract at residues 2426 to 2476 (CVFWNHSLDTGGTGGWSAKGCELLSRNRTHVTCQCSHSASCAVLMDISRRE) is GPS. Asparagine 2430 and asparagine 2452 each carry an N-linked (GlcNAc...) asparagine glycan. A helical transmembrane segment spans residues 2485-2505 (IITYAALSLSLVALLVAFVLL). Over 2506-2516 (SLVRTLRSNLH) the chain is Cytoplasmic. A helical transmembrane segment spans residues 2517–2537 (SIHKNLITALFFSQLIFMVGI). A glycan (N-linked (GlcNAc...) asparagine) is linked at asparagine 2538. Over 2538-2542 (NQTEN) the chain is Extracellular. A helical membrane pass occupies residues 2543–2563 (PFLCTVVAILLHYVSMGTFAW). Topologically, residues 2564–2587 (TLVENLHVYRMLTEVRNIDTGPMR) are cytoplasmic. A helical membrane pass occupies residues 2588-2608 (FYHVVGWGIPAIVTGLAVGLD). Topologically, residues 2609–2625 (PQGYGNPDFCWLSLQDT) are extracellular. The helical transmembrane segment at 2626 to 2646 (LIWSFAGPVGTVIIINTVIFV) threads the bilayer. Over 2647-2670 (LSAKVSCQRKHHYYERKGVVSMLR) the chain is Cytoplasmic. The helical transmembrane segment at 2671-2691 (TAFLLLLLVTATWLLGLLAVN) threads the bilayer. At 2692–2694 (SDT) the chain is on the extracellular side. The helical transmembrane segment at 2695–2715 (LSFHYLFAAFSCLQGIFVLLF) threads the bilayer. Residues 2716 to 3034 (HCVAHREVRK…QANGSDSEKP (319 aa)) lie on the Cytoplasmic side of the membrane. The tract at residues 2774-3034 (TASLDSTTRD…QANGSDSEKP (261 aa)) is disordered. Phosphoserine occurs at positions 2776, 2779, 2886, and 2888. The segment covering 2893–2909 (TEPHLKVETKVSVELHR) has biased composition (basic and acidic residues). Residues 2976–2986 (SPTSSRTSSLG) are compositionally biased toward low complexity. Basic and acidic residues predominate over residues 3003-3012 (PRREPGREHL). The span at 3020–3034 (RTGSAQANGSDSEKP) shows a compositional bias: polar residues.

The protein belongs to the G-protein coupled receptor 2 family. LN-TM7 subfamily. Post-translationally, the iron and 2-oxoglutarate dependent 3-hydroxylation of aspartate and asparagine is (R) stereospecific within EGF domains. In terms of tissue distribution, expressed in the brain, where it is localized principally in the ependymal cell layer, choroid plexus and the area postrema. Also found in spinal cord and in the eye.

The protein localises to the cell membrane. In terms of biological role, receptor that may have an important role in cell/cell signaling during nervous system formation. In Mus musculus (Mouse), this protein is Cadherin EGF LAG seven-pass G-type receptor 1 (Celsr1).